Consider the following 407-residue polypeptide: Serine/threonine transporter SstT (407 aa).

A run of 9 helical transmembrane segments spans residues 12-32 (GNLI…GISS), 42-62 (LGIL…FILI), 81-101 (IIIL…LANF), 141-161 (ALSS…GIAL), 179-199 (VLKI…GLVA), 218-238 (ILLV…IVFF), 245-267 (FPLI…SSAA), 288-308 (ISIP…IAIL), and 330-350 (IIAT…LLLI).

This sequence belongs to the dicarboxylate/amino acid:cation symporter (DAACS) (TC 2.A.23) family.

The protein resides in the cell inner membrane. It carries out the reaction L-serine(in) + Na(+)(in) = L-serine(out) + Na(+)(out). It catalyses the reaction L-threonine(in) + Na(+)(in) = L-threonine(out) + Na(+)(out). In terms of biological role, involved in the import of serine and threonine into the cell, with the concomitant import of sodium (symport system). This Campylobacter jejuni subsp. jejuni serotype O:6 (strain 81116 / NCTC 11828) protein is Serine/threonine transporter SstT.